The chain runs to 774 residues: Armadillo-like helical domain-containing protein 4 (774 aa).

The N-terminal stretch at 1–27 (MRGPIVLHICLAFCSLLLFSVATQCLA) is a signal peptide. Residues 28–714 (FPKIERRREI…KDKAGYMSGM (687 aa)) lie on the Extracellular side of the membrane. The segment covering 41 to 52 (HAEKGQSDKMNT) has biased composition (basic and acidic residues). 2 disordered regions span residues 41-63 (HAEKGQSDKMNTDDLENSSVTSK) and 97-135 (QPGQAGLMQTERPGVSTPTESGVPSAEEVFGSSQPERIS). The N-linked (GlcNAc...) asparagine glycan is linked to asparagine 57. Residue asparagine 189 is glycosylated (N-linked (GlcNAc...) asparagine). Basic and acidic residues predominate over residues 221-233 (KTEKFEADTDHRT). 2 disordered regions span residues 221-275 (KTEK…QPLE) and 600-669 (ASYG…PGLE). Positions 258–275 (SQMTADNTQAAATKQPLE) are enriched in polar residues. The segment covering 607-651 (LESEEGQEDEDEEDEEDEDEEEEDEEEDEEDKDADSLDEGLDGDT) has biased composition (acidic residues). Residues 715-735 (LVPVGVGIAGALFILGALYSI) traverse the membrane as a helical segment. The Cytoplasmic portion of the chain corresponds to 736 to 774 (KVMNRRRRNGFKRHKRKQREFNSMQDRVMLLADSSEDEF). Phosphoserine occurs at positions 769 and 770.

Interacts with IL6ST; this interaction prevents IL6ST protein homodimerization and bridges ARMH4 with IL6R and STAT3 and therefore inhibits phosphorylation of STAT3 at 'Tyr-705'. Interacts (via cytoplasmic tail) with RICTOR; this interaction bridges ARMH4 to the mTORC2 complex and inhibits the mTORC2 kinase activity. In terms of tissue distribution, expressed in podocytes.

Its subcellular location is the membrane. Functionally, may modulate immune response and may play a role in inflammation. Down-modulates STAT3 signaling throught direct interaction with IL6ST, resulting in the inhibition of phosphorylation of STAT3 at 'Tyr-705'. May negatively regulates AKT signaling by modulating the activity of mTORC2 complex through RICTOR interaction. This is Armadillo-like helical domain-containing protein 4 from Homo sapiens (Human).